We begin with the raw amino-acid sequence, 229 residues long: Potassium/proton antiporter CemA (229 aa).

The next 3 membrane-spanning stretches (helical) occupy residues 6 to 26 (AFIP…ISLS), 114 to 134 (ILCF…LLII), and 189 to 209 (IISG…KYWI).

The protein belongs to the CemA family.

The protein localises to the plastid. It is found in the chloroplast inner membrane. The catalysed reaction is K(+)(in) + H(+)(out) = K(+)(out) + H(+)(in). Functionally, contributes to K(+)/H(+) antiport activity by supporting proton efflux to control proton extrusion and homeostasis in chloroplasts in a light-dependent manner to modulate photosynthesis. Prevents excessive induction of non-photochemical quenching (NPQ) under continuous-light conditions. Indirectly promotes efficient inorganic carbon uptake into chloroplasts. The sequence is that of Potassium/proton antiporter CemA from Carica papaya (Papaya).